The following is a 317-amino-acid chain: 2,3-dihydroxyphenylpropionate/2,3-dihydroxicinnamic acid 1,2-dioxygenase (317 aa).

His115 (proton donor) is an active-site residue. Residue His179 is the Proton acceptor of the active site.

It belongs to the LigB/MhpB extradiol dioxygenase family. Homotetramer. Fe(2+) serves as cofactor.

The enzyme catalyses 3-(2,3-dihydroxyphenyl)propanoate + O2 = (2Z,4E)-2-hydroxy-6-oxonona-2,4-dienedioate + H(+). The catalysed reaction is (2E)-3-(2,3-dihydroxyphenyl)prop-2-enoate + O2 = (2Z,4E,7E)-2-hydroxy-6-oxonona-2,4,7-trienedioate + H(+). It functions in the pathway aromatic compound metabolism; 3-phenylpropanoate degradation. In terms of biological role, catalyzes the non-heme iron(II)-dependent oxidative cleavage of 2,3-dihydroxyphenylpropionic acid and 2,3-dihydroxicinnamic acid into 2-hydroxy-6-ketononadienedioate and 2-hydroxy-6-ketononatrienedioate, respectively. This Paraburkholderia phymatum (strain DSM 17167 / CIP 108236 / LMG 21445 / STM815) (Burkholderia phymatum) protein is 2,3-dihydroxyphenylpropionate/2,3-dihydroxicinnamic acid 1,2-dioxygenase.